The chain runs to 422 residues: Elongation factor 1-alpha (422 aa).

Residues 5-221 enclose the tr-type G domain; that stretch reads KPHMNLAVIG…DELKEPEKPS (217 aa). The interval 14–21 is G1; that stretch reads GHIDHGKS. GTP is bound at residue 14-21; it reads GHIDHGKS. Serine 21 lines the Mg(2+) pocket. Positions 70 to 74 are G2; the sequence is GITID. A G3 region spans residues 91–94; that stretch reads DCPG. GTP contacts are provided by residues 91-95 and 146-149; these read DCPGH and NKMD. Residues 146-149 are G4; that stretch reads NKMD. The segment at 185 to 187 is G5; sequence SAF.

This sequence belongs to the TRAFAC class translation factor GTPase superfamily. Classic translation factor GTPase family. EF-Tu/EF-1A subfamily.

The protein resides in the cytoplasm. The enzyme catalyses GTP + H2O = GDP + phosphate + H(+). Its function is as follows. GTP hydrolase that promotes the GTP-dependent binding of aminoacyl-tRNA to the A-site of ribosomes during protein biosynthesis. The polypeptide is Elongation factor 1-alpha (Methanosarcina acetivorans (strain ATCC 35395 / DSM 2834 / JCM 12185 / C2A)).